The sequence spans 921 residues: Isoleucine--tRNA ligase (921 aa).

A 'HIGH' region motif is present at residues 59 to 69; it reads PYANGHLHIGH. Residue E569 participates in L-isoleucyl-5'-AMP binding. The short motif at 610 to 614 is the 'KMSKS' region element; sequence KMSKS. Residue K613 coordinates ATP. 4 residues coordinate Zn(2+): C896, C899, C911, and C914.

It belongs to the class-I aminoacyl-tRNA synthetase family. IleS type 1 subfamily. Monomer. The cofactor is Zn(2+).

Its subcellular location is the cytoplasm. The enzyme catalyses tRNA(Ile) + L-isoleucine + ATP = L-isoleucyl-tRNA(Ile) + AMP + diphosphate. Its function is as follows. Catalyzes the attachment of isoleucine to tRNA(Ile). As IleRS can inadvertently accommodate and process structurally similar amino acids such as valine, to avoid such errors it has two additional distinct tRNA(Ile)-dependent editing activities. One activity is designated as 'pretransfer' editing and involves the hydrolysis of activated Val-AMP. The other activity is designated 'posttransfer' editing and involves deacylation of mischarged Val-tRNA(Ile). In Campylobacter hominis (strain ATCC BAA-381 / DSM 21671 / CCUG 45161 / LMG 19568 / NCTC 13146 / CH001A), this protein is Isoleucine--tRNA ligase.